We begin with the raw amino-acid sequence, 444 residues long: Phosphoglucosamine mutase (444 aa).

S102 serves as the catalytic Phosphoserine intermediate. Residues S102, D241, D243, and D245 each contribute to the Mg(2+) site. Residue S102 is modified to Phosphoserine.

It belongs to the phosphohexose mutase family. Requires Mg(2+) as cofactor. In terms of processing, activated by phosphorylation.

It carries out the reaction alpha-D-glucosamine 1-phosphate = D-glucosamine 6-phosphate. Its function is as follows. Catalyzes the conversion of glucosamine-6-phosphate to glucosamine-1-phosphate. In Actinobacillus pleuropneumoniae serotype 5b (strain L20), this protein is Phosphoglucosamine mutase.